A 358-amino-acid chain; its full sequence is DnaJ homolog subfamily B member 11 (358 aa).

An N-terminal signal peptide occupies residues 1–22 (MAPQNLSTFCLLLLYLIGAVIA). The 66-residue stretch at 25–90 (DFYKILGVPR…EKRKQYDTYG (66 aa)) folds into the J domain. T188 is subject to Phosphothreonine. N261 is a glycosylation site (N-linked (GlcNAc...) asparagine).

Part of a large chaperone multiprotein complex comprising DNAJB11, HSP90B1, HSPA5, HYOU, PDIA2, PDIA4, PDIA6, PPIB, SDF2L1, UGGT1 and very small amounts of ERP29, but not, or at very low levels, CALR nor CANX. Binds to denatured substrates in an ATP-independent manner. Interacts via the J domain with HSPA5 in an ATP-dependent manner. Contains high-mannose Endo H-sensitive carbohydrates. Post-translationally, cys-169, Cys-171, Cys-193 and Cys-196 form intramolecular disulfide bonds. The preferential partner for each Cys is not known.

It localises to the endoplasmic reticulum lumen. As a co-chaperone for HSPA5 it is required for proper folding, trafficking or degradation of proteins. Binds directly to both unfolded proteins that are substrates for ERAD and nascent unfolded peptide chains, but dissociates from the HSPA5-unfolded protein complex before folding is completed. May help recruiting HSPA5 and other chaperones to the substrate. Stimulates HSPA5 ATPase activity. It is necessary for maturation and correct trafficking of PKD1. The chain is DnaJ homolog subfamily B member 11 (Dnajb11) from Rattus norvegicus (Rat).